A 291-amino-acid chain; its full sequence is MIGIREIRSKMKSINNTKKITKAMEMVSISKLRKIKKRMCSSRPYFNIINQVISHVITGNLEHYHTYFNQRNVKRIGVIIVSTDRGLCGNLNTLLFKKVLEVLTEHINEHILNNLFVIGTKALTFFKSFTNNIVFSLSNLKNDFKIIDLMEMIRISLEMYISGKIDKLFLAYNKFNSTIIQTPTLVQLLPILKPKLGKKEVKKTWDYIYESNSKVLLNVVLNRYIEFQIYQSILENLVCEQASRMLAMKQATDNSADLLKALQMNYNKVRQSSITQELTEIISGAAAVSLN.

The protein belongs to the ATPase gamma chain family. F-type ATPases have 2 components, CF(1) - the catalytic core - and CF(0) - the membrane proton channel. CF(1) has five subunits: alpha(3), beta(3), gamma(1), delta(1), epsilon(1). CF(0) has three main subunits: a, b and c.

The protein resides in the cell membrane. Produces ATP from ADP in the presence of a proton gradient across the membrane. The gamma chain is believed to be important in regulating ATPase activity and the flow of protons through the CF(0) complex. This Buchnera aphidicola subsp. Baizongia pistaciae (strain Bp) protein is ATP synthase gamma chain.